Reading from the N-terminus, the 496-residue chain is Glycerol kinase (496 aa).

An ADP-binding site is contributed by Thr-12. The ATP site is built by Thr-12, Thr-13, and Ser-14. Thr-12 lines the sn-glycerol 3-phosphate pocket. Arg-16 contributes to the ADP binding site. Positions 82, 83, and 134 each coordinate sn-glycerol 3-phosphate. The glycerol site is built by Arg-82, Glu-83, and Tyr-134. His-230 bears the Phosphohistidine; by HPr mark. Position 244 (Asp-244) interacts with sn-glycerol 3-phosphate. Positions 244 and 245 each coordinate glycerol. The ADP site is built by Thr-266 and Gly-309. ATP is bound by residues Thr-266, Gly-309, Gln-313, and Gly-410. 2 residues coordinate ADP: Gly-410 and Asn-414.

It belongs to the FGGY kinase family. As to quaternary structure, homotetramer and homodimer (in equilibrium). Post-translationally, the phosphoenolpyruvate-dependent sugar phosphotransferase system (PTS), including enzyme I, and histidine-containing protein (HPr) are required for the phosphorylation, which leads to the activation of the enzyme.

The catalysed reaction is glycerol + ATP = sn-glycerol 3-phosphate + ADP + H(+). Its pathway is polyol metabolism; glycerol degradation via glycerol kinase pathway; sn-glycerol 3-phosphate from glycerol: step 1/1. Activated by phosphorylation and inhibited by fructose 1,6-bisphosphate (FBP). Functionally, key enzyme in the regulation of glycerol uptake and metabolism. Catalyzes the phosphorylation of glycerol to yield sn-glycerol 3-phosphate. In Bacillus cereus (strain Q1), this protein is Glycerol kinase.